Reading from the N-terminus, the 740-residue chain is MSLLLEPSPTMIKEQKMYRDMGLTDEEFAMIERILGRLPNYTETGIFSVMWSEHCSYKNSKPVLKKFPTEGKHVLQGPGEGAGIVDIGDGLAVAFKIESHNHPSAIEPYQGAATGVGGIIRDVFSMGARPIALLNSLRFGELTSPRVKYLFERVVAGIAGYGNCVGIPTVGGEVQFDAAYEGNPLVNAMCVGVIRHEDIQKGIASGVGNTVMYVGAKTGRDGIHGATFASEELTEQSEQKRPAVQVGDPFMEKLLLEACLEVIHCDALVGMQDMGAAGLTSSSAEMASKAGSGIELNLDLVPQRETGMTPYEMMLSESQERMLLVVKKGREQEIMDVFSKYGLEAKAIGRVTDDHMLRLYHRGEVVAEIPVDALAKDAPVYHKPSQEPAYYREFQTMEYVPTVDNYEETLLALLSQPTIASKEWVYEQYDYMVRTNTVVAPGSDAAVLRIRGTNKALAMTTDCNSRYVYLDPEVGGKIAIAEAARNIVCSGAQPLAVTDCLNFGNPEKPEIFWQLEKAVDGMSEACRILETPVISGNVSLYNETNGEAIYPTPIVGMVGIVEHVDHITTQAFKQPGDLIYIIGEAKQEFGGSELQKWLTGRIFGKAPTIDLHVEVKRQQQLLTAIRAGVVASAHDVSEGGLAVALAECVMSAQGLGARVEMKGDVVAELFSETQSRFIVSVKKEHQQMFERLVQAVRIGEVTNDGTLHVTAEDTCILHVPVETMRNVWKGAIPCLLKSKD.

The active site involves H54. Y57 and K96 together coordinate ATP. Residue E98 participates in Mg(2+) binding. Residues 99 to 102 (SHNH) and R121 each bind substrate. The Proton acceptor role is filled by H100. Mg(2+) is bound at residue D122. Q245 contributes to the substrate binding site. D273 contacts Mg(2+). 317-319 (ESQ) lines the substrate pocket. Residues D499 and G536 each contribute to the ATP site. N537 lines the Mg(2+) pocket. A substrate-binding site is contributed by S539.

The protein belongs to the FGAMS family. As to quaternary structure, monomer. Part of the FGAM synthase complex composed of 1 PurL, 1 PurQ and 2 PurS subunits.

The protein localises to the cytoplasm. The enzyme catalyses N(2)-formyl-N(1)-(5-phospho-beta-D-ribosyl)glycinamide + L-glutamine + ATP + H2O = 2-formamido-N(1)-(5-O-phospho-beta-D-ribosyl)acetamidine + L-glutamate + ADP + phosphate + H(+). It functions in the pathway purine metabolism; IMP biosynthesis via de novo pathway; 5-amino-1-(5-phospho-D-ribosyl)imidazole from N(2)-formyl-N(1)-(5-phospho-D-ribosyl)glycinamide: step 1/2. In terms of biological role, part of the phosphoribosylformylglycinamidine synthase complex involved in the purines biosynthetic pathway. Catalyzes the ATP-dependent conversion of formylglycinamide ribonucleotide (FGAR) and glutamine to yield formylglycinamidine ribonucleotide (FGAM) and glutamate. The FGAM synthase complex is composed of three subunits. PurQ produces an ammonia molecule by converting glutamine to glutamate. PurL transfers the ammonia molecule to FGAR to form FGAM in an ATP-dependent manner. PurS interacts with PurQ and PurL and is thought to assist in the transfer of the ammonia molecule from PurQ to PurL. The sequence is that of Phosphoribosylformylglycinamidine synthase subunit PurL from Anoxybacillus flavithermus (strain DSM 21510 / WK1).